The following is an 87-amino-acid chain: Large ribosomal subunit protein bL27 (87 aa).

The segment at 1-21 (MAHKKAGGSSRNGRDSESKRL) is disordered.

This sequence belongs to the bacterial ribosomal protein bL27 family.

The polypeptide is Large ribosomal subunit protein bL27 (Burkholderia multivorans (strain ATCC 17616 / 249)).